The primary structure comprises 189 residues: Phosphoheptose isomerase (189 aa).

The SIS domain occupies 34–189 (VADTLKNGKK…CQAVDEAFRG (156 aa)). Residue 49–51 (NGG) participates in substrate binding. Zn(2+)-binding residues include His-58 and Glu-62. Substrate contacts are provided by residues Glu-62, 91–92 (ND), 117–119 (STS), Ser-122, and Gln-169. Positions 169 and 177 each coordinate Zn(2+).

This sequence belongs to the SIS family. GmhA subfamily. Homotetramer. The cofactor is Zn(2+).

It localises to the cytoplasm. It carries out the reaction 2 D-sedoheptulose 7-phosphate = D-glycero-alpha-D-manno-heptose 7-phosphate + D-glycero-beta-D-manno-heptose 7-phosphate. Its pathway is carbohydrate biosynthesis; D-glycero-D-manno-heptose 7-phosphate biosynthesis; D-glycero-alpha-D-manno-heptose 7-phosphate and D-glycero-beta-D-manno-heptose 7-phosphate from sedoheptulose 7-phosphate: step 1/1. Catalyzes the isomerization of sedoheptulose 7-phosphate in D-glycero-D-manno-heptose 7-phosphate. This Campylobacter concisus (strain 13826) protein is Phosphoheptose isomerase.